The primary structure comprises 500 residues: L-arabinose isomerase (500 aa).

Mn(2+) is bound by residues Glu306, Glu333, His350, and His450.

The protein belongs to the arabinose isomerase family. Homohexamer. It depends on Mn(2+) as a cofactor.

The enzyme catalyses beta-L-arabinopyranose = L-ribulose. It functions in the pathway carbohydrate degradation; L-arabinose degradation via L-ribulose; D-xylulose 5-phosphate from L-arabinose (bacterial route): step 1/3. Functionally, catalyzes the conversion of L-arabinose to L-ribulose. In Yersinia enterocolitica serotype O:8 / biotype 1B (strain NCTC 13174 / 8081), this protein is L-arabinose isomerase.